The primary structure comprises 490 residues: Katanin p60 ATPase-containing subunit A-like 1 (490 aa).

Residue M1 is modified to N-acetylmethionine. Positions 95 to 184 (DPAVWPPPVP…DGEMPKFDGA (90 aa)) are disordered. Positions 116–127 (PNREVRPLRKEM) are enriched in basic and acidic residues. A compositionally biased stretch (low complexity) spans 128–139 (AGVGARGPVGRA). Positions 143 to 169 (SKSEKPSTSRDKDCRARGRDDKGRKNM) are enriched in basic and acidic residues. S174 carries the phosphoserine modification. 248–255 (GPPGTGKT) provides a ligand contact to ATP.

It belongs to the AAA ATPase family. Katanin p60 subunit A1 subfamily. A-like 1 sub-subfamily. As to quaternary structure, interacts with KATNB1 and KATNBL1.

It localises to the cytoplasm. The protein resides in the cytoskeleton. The protein localises to the spindle pole. It is found in the spindle. The catalysed reaction is n ATP + n H2O + a microtubule = n ADP + n phosphate + (n+1) alpha/beta tubulin heterodimers.. Its function is as follows. Regulates microtubule dynamics in Sertoli cells, a process that is essential for spermiogenesis and male fertility. Severs microtubules in an ATP-dependent manner, promoting rapid reorganization of cellular microtubule arrays. Has microtubule-severing activity in vitro. This Papio anubis (Olive baboon) protein is Katanin p60 ATPase-containing subunit A-like 1.